The sequence spans 122 residues: Large ribosomal subunit protein bL20 (122 aa).

Belongs to the bacterial ribosomal protein bL20 family.

In terms of biological role, binds directly to 23S ribosomal RNA and is necessary for the in vitro assembly process of the 50S ribosomal subunit. It is not involved in the protein synthesizing functions of that subunit. This Treponema pallidum (strain Nichols) protein is Large ribosomal subunit protein bL20 (rplT).